The sequence spans 128 residues: Nanos homolog 1 (128 aa).

The tract at residues 7–23 is essential for its translational repressor activity; that stretch reads FNSWSDYLGLSSLISRG. The disordered stretch occupies residues 23 to 58; that stretch reads GLQPREGGESPRPRWKASSPTPAEPLPSKAAEAHGH. The segment at 60–114 adopts a Nanos-type zinc-finger fold; it reads GCGFCRSNREAQSLYSSHRLRAPDGRVLCPVLRGYTCPLCGANGDWAHTMRYCPL. Residues cysteine 61, cysteine 64, histidine 77, cysteine 88, cysteine 96, cysteine 99, histidine 107, and cysteine 112 each contribute to the Zn(2+) site. Short sequence motifs (C2HC) lie at residues 61–88 and 96–112; these read CGFC…RVLC and CPLC…MRYC.

It belongs to the nanos family. Interacts with ccnb1.

It localises to the cytoplasm. The protein resides in the perinuclear region. In terms of biological role, acts as a translational repressor. Can mediate repression affecting different steps in the translation process: cap-driven, IRES-driven, polyadenylated RNAs or nonpolyadenylated RNAs. Essential for the development of primordial germ cells (PGCs) by ensuring their proper migration and survival. The chain is Nanos homolog 1 (nanos1) from Xenopus tropicalis (Western clawed frog).